Consider the following 225-residue polypeptide: Protein LiaH (225 aa).

Coiled-coil stretches lie at residues 58 to 151 and 161 to 182; these read KKYE…KEHM and ESAY…IRAN.

The protein belongs to the PspA/Vipp/IM30 family.

This Bacillus subtilis (strain 168) protein is Protein LiaH (liaH).